The chain runs to 327 residues: Flotillin-like protein FloA (327 aa).

Residues 2–22 (IGLIIIVVIVLVALLLLFSFV) traverse the membrane as a helical segment. The tract at residues 305-327 (ADTGMRNSINQRTNQKDDESPDK) is disordered. Basic and acidic residues predominate over residues 318-327 (NQKDDESPDK).

It belongs to the flotillin-like FloA family. As to quaternary structure, homooligomerizes.

The protein localises to the cell membrane. Its subcellular location is the membrane raft. Found in functional membrane microdomains (FMM) that may be equivalent to eukaryotic membrane rafts. FMMs are highly dynamic and increase in number as cells age. Flotillins are thought to be important factors in membrane fluidity. The sequence is that of Flotillin-like protein FloA from Staphylococcus saprophyticus subsp. saprophyticus (strain ATCC 15305 / DSM 20229 / NCIMB 8711 / NCTC 7292 / S-41).